The chain runs to 123 residues: Small ribosomal subunit protein uS12 (123 aa).

A 3-methylthioaspartic acid modification is found at D89.

This sequence belongs to the universal ribosomal protein uS12 family. As to quaternary structure, part of the 30S ribosomal subunit. Contacts proteins S8 and S17. May interact with IF1 in the 30S initiation complex.

Functionally, with S4 and S5 plays an important role in translational accuracy. Its function is as follows. Interacts with and stabilizes bases of the 16S rRNA that are involved in tRNA selection in the A site and with the mRNA backbone. Located at the interface of the 30S and 50S subunits, it traverses the body of the 30S subunit contacting proteins on the other side and probably holding the rRNA structure together. The combined cluster of proteins S8, S12 and S17 appears to hold together the shoulder and platform of the 30S subunit. This chain is Small ribosomal subunit protein uS12, found in Brucella anthropi (strain ATCC 49188 / DSM 6882 / CCUG 24695 / JCM 21032 / LMG 3331 / NBRC 15819 / NCTC 12168 / Alc 37) (Ochrobactrum anthropi).